A 302-amino-acid polypeptide reads, in one-letter code: Recombination-associated protein RdgC (302 aa).

This sequence belongs to the RdgC family.

It localises to the cytoplasm. The protein localises to the nucleoid. Its function is as follows. May be involved in recombination. The polypeptide is Recombination-associated protein RdgC (Xylella fastidiosa (strain M12)).